The primary structure comprises 137 residues: Nucleoside diphosphate kinase (137 aa).

ATP contacts are provided by K10, F58, R86, T92, R103, and N113. Catalysis depends on H116, which acts as the Pros-phosphohistidine intermediate.

The protein belongs to the NDK family. Homotetramer. It depends on Mg(2+) as a cofactor.

It localises to the cytoplasm. The enzyme catalyses a 2'-deoxyribonucleoside 5'-diphosphate + ATP = a 2'-deoxyribonucleoside 5'-triphosphate + ADP. The catalysed reaction is a ribonucleoside 5'-diphosphate + ATP = a ribonucleoside 5'-triphosphate + ADP. In terms of biological role, major role in the synthesis of nucleoside triphosphates other than ATP. The ATP gamma phosphate is transferred to the NDP beta phosphate via a ping-pong mechanism, using a phosphorylated active-site intermediate. The polypeptide is Nucleoside diphosphate kinase (Helicobacter pylori (strain ATCC 700392 / 26695) (Campylobacter pylori)).